The chain runs to 359 residues: ATP-dependent (S)-NAD(P)H-hydrate dehydratase (359 aa).

Residues 61-350 (LLEEARKVVP…SEINSVFVNN (290 aa)) form the YjeF C-terminal domain. (6S)-NADPHX contacts are provided by residues Gly-161 and 214–220 (NVVEFQR). Residues 256 to 260 (KGEVD) and 275 to 284 (GSPRRCGGQG) contribute to the ATP site. Asp-285 serves as a coordination point for (6S)-NADPHX.

Belongs to the NnrD/CARKD family. The cofactor is Mg(2+).

The enzyme catalyses (6S)-NADHX + ATP = ADP + phosphate + NADH + H(+). It carries out the reaction (6S)-NADPHX + ATP = ADP + phosphate + NADPH + H(+). Catalyzes the dehydration of the S-form of NAD(P)HX at the expense of ATP, which is converted to ADP. Together with NAD(P)HX epimerase, which catalyzes the epimerization of the S- and R-forms, the enzyme allows the repair of both epimers of NAD(P)HX, a damaged form of NAD(P)H that is a result of enzymatic or heat-dependent hydration. This chain is ATP-dependent (S)-NAD(P)H-hydrate dehydratase, found in Ciona intestinalis (Transparent sea squirt).